We begin with the raw amino-acid sequence, 409 residues long: Lissencephaly-1 homolog (409 aa).

The region spanning 7–39 (RRERSNQAIADYLGSNGYTDALEAFRKEADMPN) is the LisH domain. Residues 54–81 (TSVIRLQKKVMELEAKLSEAEKEAIEGA) adopt a coiled-coil conformation. 7 WD repeats span residues 104 to 145 (GHRA…RTLK), 146 to 185 (GHTD…ECVK), 189 to 228 (GHDH…CVKT), 231 to 270 (GHRE…CKAE), 273 to 332 (EHEN…CLFT), 335 to 374 (GHDN…CMKT), and 377 to 409 (AHSH…WECR).

The protein belongs to the WD repeat LIS1/nudF family.

It is found in the cytoplasm. The protein localises to the cytoskeleton. Its subcellular location is the microtubule organizing center. The protein resides in the centrosome. In terms of biological role, positively regulates the activity of the minus-end directed microtubule motor protein dynein. May enhance dynein-mediated microtubule sliding by targeting dynein to the microtubule plus end. Required for several dynein- and microtubule-dependent processes. This chain is Lissencephaly-1 homolog, found in Aedes aegypti (Yellowfever mosquito).